A 273-amino-acid polypeptide reads, in one-letter code: 4-hydroxy-tetrahydrodipicolinate reductase (273 aa).

NAD(+) is bound by residues 10–15 (GAGGRM), E36, 100–102 (GTT), and 124–127 (SGNM). The Proton donor/acceptor role is filled by H157. Residue H158 participates in (S)-2,3,4,5-tetrahydrodipicolinate binding. Catalysis depends on K161, which acts as the Proton donor. (S)-2,3,4,5-tetrahydrodipicolinate is bound at residue 167-168 (GT).

The protein belongs to the DapB family.

The protein localises to the cytoplasm. It catalyses the reaction (S)-2,3,4,5-tetrahydrodipicolinate + NAD(+) + H2O = (2S,4S)-4-hydroxy-2,3,4,5-tetrahydrodipicolinate + NADH + H(+). The catalysed reaction is (S)-2,3,4,5-tetrahydrodipicolinate + NADP(+) + H2O = (2S,4S)-4-hydroxy-2,3,4,5-tetrahydrodipicolinate + NADPH + H(+). It functions in the pathway amino-acid biosynthesis; L-lysine biosynthesis via DAP pathway; (S)-tetrahydrodipicolinate from L-aspartate: step 4/4. Functionally, catalyzes the conversion of 4-hydroxy-tetrahydrodipicolinate (HTPA) to tetrahydrodipicolinate. The chain is 4-hydroxy-tetrahydrodipicolinate reductase from Rhodopseudomonas palustris (strain BisA53).